The sequence spans 367 residues: UDP-N-acetylglucosamine--N-acetylmuramyl-(pentapeptide) pyrophosphoryl-undecaprenol N-acetylglucosamine transferase (367 aa).

UDP-N-acetyl-alpha-D-glucosamine contacts are provided by residues 15 to 17 (TGG), N127, R163, S191, I249, and Q294.

Belongs to the glycosyltransferase 28 family. MurG subfamily.

It is found in the cell inner membrane. It carries out the reaction di-trans,octa-cis-undecaprenyl diphospho-N-acetyl-alpha-D-muramoyl-L-alanyl-D-glutamyl-meso-2,6-diaminopimeloyl-D-alanyl-D-alanine + UDP-N-acetyl-alpha-D-glucosamine = di-trans,octa-cis-undecaprenyl diphospho-[N-acetyl-alpha-D-glucosaminyl-(1-&gt;4)]-N-acetyl-alpha-D-muramoyl-L-alanyl-D-glutamyl-meso-2,6-diaminopimeloyl-D-alanyl-D-alanine + UDP + H(+). Its pathway is cell wall biogenesis; peptidoglycan biosynthesis. Cell wall formation. Catalyzes the transfer of a GlcNAc subunit on undecaprenyl-pyrophosphoryl-MurNAc-pentapeptide (lipid intermediate I) to form undecaprenyl-pyrophosphoryl-MurNAc-(pentapeptide)GlcNAc (lipid intermediate II). This Burkholderia cenocepacia (strain ATCC BAA-245 / DSM 16553 / LMG 16656 / NCTC 13227 / J2315 / CF5610) (Burkholderia cepacia (strain J2315)) protein is UDP-N-acetylglucosamine--N-acetylmuramyl-(pentapeptide) pyrophosphoryl-undecaprenol N-acetylglucosamine transferase.